The sequence spans 292 residues: 4-hydroxy-tetrahydrodipicolinate synthase (292 aa).

Thr-45 serves as a coordination point for pyruvate. The Proton donor/acceptor role is filled by Tyr-133. Lys-161 serves as the catalytic Schiff-base intermediate with substrate. Ile-203 lines the pyruvate pocket.

This sequence belongs to the DapA family. In terms of assembly, homodimer.

The protein localises to the cytoplasm. It carries out the reaction L-aspartate 4-semialdehyde + pyruvate = (2S,4S)-4-hydroxy-2,3,4,5-tetrahydrodipicolinate + H2O + H(+). It functions in the pathway amino-acid biosynthesis; L-lysine biosynthesis via DAP pathway; (S)-tetrahydrodipicolinate from L-aspartate: step 3/4. Catalyzes the condensation of (S)-aspartate-beta-semialdehyde [(S)-ASA] and pyruvate to 4-hydroxy-tetrahydrodipicolinate (HTPA). This chain is 4-hydroxy-tetrahydrodipicolinate synthase, found in Pseudomonas savastanoi pv. phaseolicola (strain 1448A / Race 6) (Pseudomonas syringae pv. phaseolicola (strain 1448A / Race 6)).